The following is a 131-amino-acid chain: Small ribosomal subunit protein uS11 (131 aa).

The protein belongs to the universal ribosomal protein uS11 family. Part of the 30S ribosomal subunit. Interacts with proteins S7 and S18. Binds to IF-3.

In terms of biological role, located on the platform of the 30S subunit, it bridges several disparate RNA helices of the 16S rRNA. Forms part of the Shine-Dalgarno cleft in the 70S ribosome. The protein is Small ribosomal subunit protein uS11 of Geobacter metallireducens (strain ATCC 53774 / DSM 7210 / GS-15).